We begin with the raw amino-acid sequence, 169 residues long: Peptide methionine sulfoxide reductase MsrA 1 (169 aa).

The active site involves cysteine 12.

It belongs to the MsrA Met sulfoxide reductase family.

It carries out the reaction L-methionyl-[protein] + [thioredoxin]-disulfide + H2O = L-methionyl-(S)-S-oxide-[protein] + [thioredoxin]-dithiol. The catalysed reaction is [thioredoxin]-disulfide + L-methionine + H2O = L-methionine (S)-S-oxide + [thioredoxin]-dithiol. Has an important function as a repair enzyme for proteins that have been inactivated by oxidation. Catalyzes the reversible oxidation-reduction of methionine sulfoxide in proteins to methionine. This is Peptide methionine sulfoxide reductase MsrA 1 (msrA1) from Staphylococcus aureus (strain Mu50 / ATCC 700699).